A 133-amino-acid chain; its full sequence is Adenosine 5'-monophosphoramidase hnt1 (133 aa).

The region spanning 4–107 (IFCKIVKGDI…IPKPNEEYGL (104 aa)) is the HIT domain. AMP-binding positions include 29–30 (DI), Asn81, 87–89 (HQF), and 94–96 (HFH). The Histidine triad motif signature appears at 92–96 (HVHFH). His94 acts as the Tele-AMP-histidine intermediate in catalysis.

The protein belongs to the HINT family. In terms of assembly, homodimer. The cofactor is Mg(2+).

The protein resides in the nucleus. The catalysed reaction is adenosine 5'-phosphoramidate + H2O = AMP + NH4(+). Hydrolyzes adenosine 5'-monophosphoramidate substrates such as AMP-morpholidate, AMP-N-alanine methyl ester, AMP-alpha-acetyl lysine methyl ester and AMP-NH2. The protein is Adenosine 5'-monophosphoramidase hnt1 (hnt1) of Schizosaccharomyces pombe (strain 972 / ATCC 24843) (Fission yeast).